The following is a 481-amino-acid chain: 3-isopropylmalate dehydratase large subunit (481 aa).

Positions 363, 423, and 426 each coordinate [4Fe-4S] cluster. A disordered region spans residues 432 to 459; sequence DQLKPGERSASTSNRNFEGRQGPGGRTH.

It belongs to the aconitase/IPM isomerase family. LeuC type 1 subfamily. As to quaternary structure, heterodimer of LeuC and LeuD. [4Fe-4S] cluster serves as cofactor.

It carries out the reaction (2R,3S)-3-isopropylmalate = (2S)-2-isopropylmalate. The protein operates within amino-acid biosynthesis; L-leucine biosynthesis; L-leucine from 3-methyl-2-oxobutanoate: step 2/4. Functionally, catalyzes the isomerization between 2-isopropylmalate and 3-isopropylmalate, via the formation of 2-isopropylmaleate. The protein is 3-isopropylmalate dehydratase large subunit of Corynebacterium glutamicum (strain R).